The sequence spans 597 residues: (E)-sabinene hydrate synthase, chloroplastic (597 aa).

A chloroplast-targeting transit peptide spans 1–47; it reads MSTISINHVGILRNPLQCKNKRTSINKPWSLSLPRSSPASRLVKPCR. Aspartate 353 and aspartate 357 together coordinate Mn(2+). The DDXXD motif signature appears at 353–357; sequence DDVYD. Homodimerization regions lie at residues 359-365 and 431-468; these read YGTLDEL and EAGW…VSLP. Residues aspartate 495 and glutamate 503 each contribute to the Mn(2+) site.

It belongs to the terpene synthase family. As to quaternary structure, homodimer. The cofactor is Mn(2+). It depends on Mg(2+) as a cofactor.

Its subcellular location is the plastid. It localises to the chloroplast. It carries out the reaction (2E)-geranyl diphosphate + H2O = sabinene hydrate + diphosphate. The protein operates within secondary metabolite biosynthesis; terpenoid biosynthesis. Functionally, involved in the biosynthesis of phenolic monoterpenes natural products. Monoterpene synthase which catalyzes the conversion of geranyl diphosphate (GPP) to sabinene hydrate, specifically (E)-sabinene hydrate, and the formation of minor amounts and traces of several other monoterpenes (e.g. mainly alpha-pinene, limonene and alpha-terpineol). The protein is (E)-sabinene hydrate synthase, chloroplastic of Thymus vulgaris (Thyme).